The sequence spans 103 residues: MANLAKATGKLKSVDYEVFGRVQGVCFRMYTEDEARKLGVVGWVKNTRQGTVTGQVQGPEDKVNSMKAWLSRVGSPSSRIDRIDFNDEKEITKLQYNGFSTRY.

Positions 13-103 constitute an Acylphosphatase-like domain; it reads SVDYEVFGRV…LQYNGFSTRY (91 aa). Catalysis depends on residues R28 and N46.

This sequence belongs to the acylphosphatase family.

It carries out the reaction an acyl phosphate + H2O = a carboxylate + phosphate + H(+). The protein is Acylphosphatase-2 (acyp2) of Xenopus tropicalis (Western clawed frog).